Here is an 85-residue protein sequence, read N- to C-terminus: uncharacterized protein (85 aa).

The next 3 membrane-spanning stretches (helical) occupy residues 4-24 (LTLC…LGGA), 27-47 (SPWL…LIGE), and 61-81 (RLLL…LYLA).

It is found in the cell membrane. This is an uncharacterized protein from Pseudomonas aeruginosa (strain ATCC 15692 / DSM 22644 / CIP 104116 / JCM 14847 / LMG 12228 / 1C / PRS 101 / PAO1).